We begin with the raw amino-acid sequence, 481 residues long: Glycosyl hydrolase family 109 protein 1 (481 aa).

The tat-type signal signal peptide spans 1-29; it reads MDNSSSRRRFLQTLGLATGALAAGSFANA. NAD(+) is bound by residues 84-85, D106, 155-158, 175-176, and N204; these read ER, WEWH, and EV. Substrate contacts are provided by residues Y233, R252, 264–267, and Y347; that span reads YPTH. Y264 provides a ligand contact to NAD(+).

It belongs to the Gfo/Idh/MocA family. Glycosyl hydrolase 109 subfamily. NAD(+) serves as cofactor. Predicted to be exported by the Tat system. The position of the signal peptide cleavage has not been experimentally proven.

In terms of biological role, glycosidase. The sequence is that of Glycosyl hydrolase family 109 protein 1 from Akkermansia muciniphila (strain ATCC BAA-835 / DSM 22959 / JCM 33894 / BCRC 81048 / CCUG 64013 / CIP 107961 / Muc).